Reading from the N-terminus, the 851-residue chain is DNA mismatch repair protein MutS (851 aa).

614–621 contacts ATP; the sequence is GPNMGGKS.

The protein belongs to the DNA mismatch repair MutS family.

This protein is involved in the repair of mismatches in DNA. It is possible that it carries out the mismatch recognition step. This protein has a weak ATPase activity. The sequence is that of DNA mismatch repair protein MutS from Serratia proteamaculans (strain 568).